Reading from the N-terminus, the 209-residue chain is MFSYLKGEAIAIHRNLQGRFFLILEVRDIGYEIQVPGRLAQELAAAIGQPQHIFVHSQQREDGTYLYGFASAAARDLFRQLISVSGIGAQGAIALLDTLTLPELVQAIVTADHRQLAKAPGIGKKTAERLALELRSKLSQWRDQFSLPDTAAQPNAAVHEDLELTLLALGYQETEIRGAIATLSQDSILLQNDNADEWIRRAITLLSQT.

The tract at residues 1 to 70 (MFSYLKGEAI…EDGTYLYGFA (70 aa)) is domain I. The tract at residues 71 to 149 (SAAARDLFRQ…QWRDQFSLPD (79 aa)) is domain II. The flexible linker stretch occupies residues 149 to 153 (DTAAQ). The segment at 154–209 (PNAAVHEDLELTLLALGYQETEIRGAIATLSQDSILLQNDNADEWIRRAITLLSQT) is domain III.

The protein belongs to the RuvA family. Homotetramer. Forms an RuvA(8)-RuvB(12)-Holliday junction (HJ) complex. HJ DNA is sandwiched between 2 RuvA tetramers; dsDNA enters through RuvA and exits via RuvB. An RuvB hexamer assembles on each DNA strand where it exits the tetramer. Each RuvB hexamer is contacted by two RuvA subunits (via domain III) on 2 adjacent RuvB subunits; this complex drives branch migration. In the full resolvosome a probable DNA-RuvA(4)-RuvB(12)-RuvC(2) complex forms which resolves the HJ.

Its subcellular location is the cytoplasm. In terms of biological role, the RuvA-RuvB-RuvC complex processes Holliday junction (HJ) DNA during genetic recombination and DNA repair, while the RuvA-RuvB complex plays an important role in the rescue of blocked DNA replication forks via replication fork reversal (RFR). RuvA specifically binds to HJ cruciform DNA, conferring on it an open structure. The RuvB hexamer acts as an ATP-dependent pump, pulling dsDNA into and through the RuvAB complex. HJ branch migration allows RuvC to scan DNA until it finds its consensus sequence, where it cleaves and resolves the cruciform DNA. This chain is Holliday junction branch migration complex subunit RuvA, found in Picosynechococcus sp. (strain ATCC 27264 / PCC 7002 / PR-6) (Agmenellum quadruplicatum).